The chain runs to 146 residues: D-aminoacyl-tRNA deacylase (146 aa).

A Gly-cisPro motif, important for rejection of L-amino acids motif is present at residues 137–138; sequence GP.

Belongs to the DTD family. Homodimer.

It localises to the cytoplasm. The enzyme catalyses glycyl-tRNA(Ala) + H2O = tRNA(Ala) + glycine + H(+). The catalysed reaction is a D-aminoacyl-tRNA + H2O = a tRNA + a D-alpha-amino acid + H(+). An aminoacyl-tRNA editing enzyme that deacylates mischarged D-aminoacyl-tRNAs. Also deacylates mischarged glycyl-tRNA(Ala), protecting cells against glycine mischarging by AlaRS. Acts via tRNA-based rather than protein-based catalysis; rejects L-amino acids rather than detecting D-amino acids in the active site. By recycling D-aminoacyl-tRNA to D-amino acids and free tRNA molecules, this enzyme counteracts the toxicity associated with the formation of D-aminoacyl-tRNA entities in vivo and helps enforce protein L-homochirality. This Acinetobacter baylyi (strain ATCC 33305 / BD413 / ADP1) protein is D-aminoacyl-tRNA deacylase.